A 206-amino-acid chain; its full sequence is Uracil phosphoribosyltransferase (206 aa).

5-phospho-alpha-D-ribose 1-diphosphate is bound by residues arginine 76, arginine 101, and 128–136 (DPMLATGTT). Residues isoleucine 191 and 196 to 198 (GDA) contribute to the uracil site. Aspartate 197 contributes to the 5-phospho-alpha-D-ribose 1-diphosphate binding site.

Belongs to the UPRTase family. Mg(2+) serves as cofactor.

The enzyme catalyses UMP + diphosphate = 5-phospho-alpha-D-ribose 1-diphosphate + uracil. It participates in pyrimidine metabolism; UMP biosynthesis via salvage pathway; UMP from uracil: step 1/1. With respect to regulation, allosterically activated by GTP. Functionally, catalyzes the conversion of uracil and 5-phospho-alpha-D-ribose 1-diphosphate (PRPP) to UMP and diphosphate. This chain is Uracil phosphoribosyltransferase, found in Mycoplasma genitalium (strain ATCC 33530 / DSM 19775 / NCTC 10195 / G37) (Mycoplasmoides genitalium).